The chain runs to 284 residues: uncharacterized protein (284 aa).

Residues 1 to 10 are compositionally biased toward polar residues; the sequence is MSNSVTNFEM. The tract at residues 1-28 is disordered; it reads MSNSVTNFEMSSVLPGKKPCQGKNNESQ.

This is an uncharacterized protein from Escherichia coli (strain K12).